A 494-amino-acid polypeptide reads, in one-letter code: UDP-N-acetylmuramate--L-alanine ligase (494 aa).

Residue 140-146 (GTHGKTT) coordinates ATP.

It belongs to the MurCDEF family.

Its subcellular location is the cytoplasm. The enzyme catalyses UDP-N-acetyl-alpha-D-muramate + L-alanine + ATP = UDP-N-acetyl-alpha-D-muramoyl-L-alanine + ADP + phosphate + H(+). Its pathway is cell wall biogenesis; peptidoglycan biosynthesis. Functionally, cell wall formation. In Nostoc sp. (strain PCC 7120 / SAG 25.82 / UTEX 2576), this protein is UDP-N-acetylmuramate--L-alanine ligase.